Here is a 141-residue protein sequence, read N- to C-terminus: Large ribosomal subunit protein uL11 (141 aa).

This sequence belongs to the universal ribosomal protein uL11 family. As to quaternary structure, part of the ribosomal stalk of the 50S ribosomal subunit. Interacts with L10 and the large rRNA to form the base of the stalk. L10 forms an elongated spine to which L12 dimers bind in a sequential fashion forming a multimeric L10(L12)X complex. Post-translationally, one or more lysine residues are methylated.

Functionally, forms part of the ribosomal stalk which helps the ribosome interact with GTP-bound translation factors. This chain is Large ribosomal subunit protein uL11, found in Thermotoga petrophila (strain ATCC BAA-488 / DSM 13995 / JCM 10881 / RKU-1).